Reading from the N-terminus, the 173-residue chain is Gamma-crystallin S-2 (173 aa).

2 consecutive Beta/gamma crystallin 'Greek key' domains span residues 2–40 (GKIIFYEDRNFQGRNYECSSDCADLSPYFSRCNSIRVES) and 41–83 (DWWV…RVPT). The segment at 84 to 88 (HTQRP) is connecting peptide. Beta/gamma crystallin 'Greek key' domains follow at residues 89–129 (YRMR…HVMG) and 130–172 (AYWI…RRIM).

The protein belongs to the beta/gamma-crystallin family.

In terms of biological role, crystallins are the dominant structural components of the vertebrate eye lens. This Chiloscyllium indicum (Slender bamboo shark) protein is Gamma-crystallin S-2 (GS-2).